We begin with the raw amino-acid sequence, 438 residues long: Serine hydroxymethyltransferase (438 aa).

Residues leucine 133 and 137–139 (GHL) contribute to the (6S)-5,6,7,8-tetrahydrofolate site. Lysine 242 is subject to N6-(pyridoxal phosphate)lysine.

Belongs to the SHMT family. In terms of assembly, homodimer. Requires pyridoxal 5'-phosphate as cofactor.

The protein localises to the cytoplasm. It carries out the reaction (6R)-5,10-methylene-5,6,7,8-tetrahydrofolate + glycine + H2O = (6S)-5,6,7,8-tetrahydrofolate + L-serine. The protein operates within one-carbon metabolism; tetrahydrofolate interconversion. It functions in the pathway amino-acid biosynthesis; glycine biosynthesis; glycine from L-serine: step 1/1. Functionally, catalyzes the reversible interconversion of serine and glycine with tetrahydrofolate (THF) serving as the one-carbon carrier. This reaction serves as the major source of one-carbon groups required for the biosynthesis of purines, thymidylate, methionine, and other important biomolecules. Also exhibits THF-independent aldolase activity toward beta-hydroxyamino acids, producing glycine and aldehydes, via a retro-aldol mechanism. The protein is Serine hydroxymethyltransferase of Brucella canis (strain ATCC 23365 / NCTC 10854 / RM-666).